A 78-amino-acid chain; its full sequence is Large ribosomal subunit protein bL28 (78 aa).

It belongs to the bacterial ribosomal protein bL28 family.

The sequence is that of Large ribosomal subunit protein bL28 from Acinetobacter baylyi (strain ATCC 33305 / BD413 / ADP1).